The sequence spans 98 residues: Co-chaperonin GroES 1 (98 aa).

Belongs to the GroES chaperonin family. In terms of assembly, heptamer of 7 subunits arranged in a ring. Interacts with the chaperonin GroEL.

It is found in the cytoplasm. Together with the chaperonin GroEL, plays an essential role in assisting protein folding. The GroEL-GroES system forms a nano-cage that allows encapsulation of the non-native substrate proteins and provides a physical environment optimized to promote and accelerate protein folding. GroES binds to the apical surface of the GroEL ring, thereby capping the opening of the GroEL channel. This is Co-chaperonin GroES 1 from Rhodopseudomonas palustris (strain ATCC BAA-98 / CGA009).